A 135-amino-acid chain; its full sequence is Ribonuclease P protein component 2 (135 aa).

Belongs to the eukaryotic/archaeal RNase P protein component 2 family. As to quaternary structure, consists of a catalytic RNA component and at least 4-5 protein subunits.

It localises to the cytoplasm. It carries out the reaction Endonucleolytic cleavage of RNA, removing 5'-extranucleotides from tRNA precursor.. Functionally, part of ribonuclease P, a protein complex that generates mature tRNA molecules by cleaving their 5'-ends. The chain is Ribonuclease P protein component 2 from Methanosarcina barkeri (strain Fusaro / DSM 804).